A 311-amino-acid polypeptide reads, in one-letter code: Apulose-4-phosphate transketolase subunit B (311 aa).

This sequence belongs to the transketolase family. In terms of assembly, probable heterodimer composed of AptA and AptB. The cofactor is thiamine diphosphate.

The enzyme catalyses apulose 4-phosphate + D-glyceraldehyde 3-phosphate = D-xylulose 5-phosphate + dihydroxyacetone phosphate. The protein operates within carbohydrate metabolism. Its function is as follows. Involved in catabolism of D-apiose. Catalyzes the transfer of the glycolaldehyde group from apulose-4-phosphate to D-glyceraldehyde 3-phosphate, generating dihydroxyacetone phosphate and D-xylulose-5-phosphate. The sequence is that of Apulose-4-phosphate transketolase subunit B from Actinobacillus succinogenes (strain ATCC 55618 / DSM 22257 / CCUG 43843 / 130Z).